Here is a 97-residue protein sequence, read N- to C-terminus: Cobalt transport protein CbiN (97 aa).

The next 2 helical transmembrane spans lie at 6 to 26 and 68 to 88; these read VLMI…YSGL and SLLF…FFGY.

Belongs to the CbiN family. Forms an energy-coupling factor (ECF) transporter complex composed of an ATP-binding protein (A component, CbiO), a transmembrane protein (T component, CbiQ) and 2 possible substrate-capture proteins (S components, CbiM and CbiN) of unknown stoichimetry.

It is found in the cell membrane. It participates in cofactor biosynthesis; adenosylcobalamin biosynthesis. In terms of biological role, part of the energy-coupling factor (ECF) transporter complex CbiMNOQ involved in cobalt import. This Methanococcus maripaludis (strain C5 / ATCC BAA-1333) protein is Cobalt transport protein CbiN.